The primary structure comprises 967 residues: RNA polymerase-associated protein RapA (967 aa).

The Helicase ATP-binding domain occupies 163–337 (EVGQRTAPRV…FARLSLLDPD (175 aa)). 176-183 (DEVGLGKT) is a binding site for ATP. The DEAH box motif lies at 283 to 286 (DEAH). Positions 489-660 (RLEWLITFLK…KFLQNPTALE (172 aa)) constitute a Helicase C-terminal domain.

This sequence belongs to the SNF2/RAD54 helicase family. RapA subfamily. In terms of assembly, interacts with the RNAP. Has a higher affinity for the core RNAP than for the holoenzyme. Its ATPase activity is stimulated by binding to RNAP.

Its function is as follows. Transcription regulator that activates transcription by stimulating RNA polymerase (RNAP) recycling in case of stress conditions such as supercoiled DNA or high salt concentrations. Probably acts by releasing the RNAP, when it is trapped or immobilized on tightly supercoiled DNA. Does not activate transcription on linear DNA. Probably not involved in DNA repair. The protein is RNA polymerase-associated protein RapA of Pasteurella multocida (strain Pm70).